Consider the following 111-residue polypeptide: Phosphoribosyl-ATP pyrophosphatase (111 aa).

It belongs to the PRA-PH family.

The protein localises to the cytoplasm. It carries out the reaction 1-(5-phospho-beta-D-ribosyl)-ATP + H2O = 1-(5-phospho-beta-D-ribosyl)-5'-AMP + diphosphate + H(+). The protein operates within amino-acid biosynthesis; L-histidine biosynthesis; L-histidine from 5-phospho-alpha-D-ribose 1-diphosphate: step 2/9. The sequence is that of Phosphoribosyl-ATP pyrophosphatase from Azotobacter vinelandii (strain DJ / ATCC BAA-1303).